The following is a 222-amino-acid chain: Octanoyltransferase (222 aa).

A BPL/LPL catalytic domain is found at 34–214 (GEKNSTVLIL…EFSKHDEALV (181 aa)). Substrate contacts are provided by residues 72–79 (RGGKLTWH), 144–146 (AIG), and 157–159 (GVA). Cys-175 (acyl-thioester intermediate) is an active-site residue.

Belongs to the LipB family.

The protein localises to the cytoplasm. The catalysed reaction is octanoyl-[ACP] + L-lysyl-[protein] = N(6)-octanoyl-L-lysyl-[protein] + holo-[ACP] + H(+). Its pathway is protein modification; protein lipoylation via endogenous pathway; protein N(6)-(lipoyl)lysine from octanoyl-[acyl-carrier-protein]: step 1/2. In terms of biological role, catalyzes the transfer of endogenously produced octanoic acid from octanoyl-acyl-carrier-protein onto the lipoyl domains of lipoate-dependent enzymes. Lipoyl-ACP can also act as a substrate although octanoyl-ACP is likely to be the physiological substrate. The sequence is that of Octanoyltransferase from Paenarthrobacter aurescens (strain TC1).